We begin with the raw amino-acid sequence, 3336 residues long: Pericentrin (3336 aa).

Disordered stretches follow at residues 1–71 and 81–100; these read MEVE…DICK and GAGG…KRED. Over residues 27-37 the composition is skewed to basic and acidic residues; it reads TKGDSSHSEKK. A Phosphoserine modification is found at Ser44. Ser188 carries the post-translational modification Phosphoserine. Thr191 is modified (phosphothreonine). Residues 258 to 553 are a coiled coil; sequence HTAQLELTQA…RLQGAREDAL (296 aa). Positions 569–589 are disordered; sequence KPEKGRKDHVDELEPERHKES. A phosphoserine mark is found at Ser610 and Ser682. 2 coiled-coil regions span residues 675-835 and 1010-1146; these read TEHK…DALH and TILT…MLKA. A Phosphoserine modification is found at Ser1245. Residues 1299–1949 adopt a coiled-coil conformation; sequence NEETAQVVRK…FLRCQVELDR (651 aa). A disordered region spans residues 1619–1638; sequence TLDAGRCPEPPSGSPPEGPE. Positions 1626-1636 are enriched in pro residues; the sequence is PEPPSGSPPEG. Phosphoserine is present on residues Ser1653 and Ser1712. A disordered region spans residues 1954–1974; the sequence is RATAHTRVPGAHPQPRMDGGA. Residue Ser2044 is modified to Phosphoserine. Residues 2064 to 2082 are a coiled coil; it reads VDLVAQVKQLQEKLNRLLY. The interval 2168 to 2214 is disordered; that stretch reads SLIPDEMPDSPIQEKSECQDMSLSSPTSVLGGSRHQSHTAEAGPRKS. 5 positions are modified to phosphoserine: Ser2177, Ser2192, Ser2225, Ser2226, and Ser2327. The span at 2186–2197 shows a compositional bias: polar residues; sequence QDMSLSSPTSVL. The interval 2318 to 2374 is disordered; the sequence is SFDSQETLSSPPPGLEGKADRSEKSDGSGFGARLSPGSGGPEAQTAGPVTPASISGR. Basic and acidic residues predominate over residues 2334–2343; the sequence is GKADRSEKSD. Phosphoserine occurs at positions 2352, 2355, 2477, and 2486. A coiled-coil region spans residues 2536 to 3086; it reads QEKLQHLRTA…EKLLKHHLQK (551 aa). Disordered regions lie at residues 2875-2910 and 3084-3126; these read LEQS…WRKW and LQKG…EEAH. 2 stretches are compositionally biased toward basic and acidic residues: residues 2876–2896 and 3092–3102; these read EQSH…RSAE and RSERSAWKPDE. The interaction with NEK2 stretch occupies residues 2983 to 3246; it reads LSAARLLTSF…ARQPQSPPRT (264 aa). A calmodulin-binding region spans residues 3195 to 3208; it reads RFRTAVRVVIAILR. The segment at 3224 to 3300 is disordered; it reads ALAQGKAPRP…RSLTASQDPE (77 aa). Over residues 3226 to 3240 the composition is skewed to low complexity; sequence AQGKAPRPGPRARQP. Over residues 3283 to 3297 the composition is skewed to polar residues; that stretch reads PSPNSRLERSLTASQ. Ser3302 bears the Phosphoserine mark.

In terms of assembly, interacts with CHD3. Interacts with CHD4; the interaction regulates centrosome integrity. Interacts with DISC1 and PCM1. Binds calmodulin. Interacts with CDK5RAP2; the interaction is leading to centrosomal localization of PCNT and CDK5RAP2. Interacts with isoform 1 of NEK2. Interacts with CEP131. Interacts with CCDC13. Interacts with CEP68. Interacts with ATF5; the ATF5:PCNT:polyglutamylated tubulin (PGT) tripartite unites the mother centriole and the pericentriolar material (PCM) in the centrosome. Cleaved during mitotis which leads to removal of CDK5RAP2 from the centrosome and promotes centriole disengagement and subsequent centriole separation. The C-terminal fragment is rapidly degraded following cleavage. In terms of processing, ubiquitinated by TRIM43; leading to proteasomal degradation. As to expression, expressed in all tissues tested, including placenta, liver, kidney and thymus.

The protein resides in the cytoplasm. Its subcellular location is the cytoskeleton. It is found in the microtubule organizing center. The protein localises to the centrosome. Its function is as follows. Integral component of the filamentous matrix of the centrosome involved in the initial establishment of organized microtubule arrays in both mitosis and meiosis. Plays a role, together with DISC1, in the microtubule network formation. Is an integral component of the pericentriolar material (PCM). May play an important role in preventing premature centrosome splitting during interphase by inhibiting NEK2 kinase activity at the centrosome. This chain is Pericentrin (PCNT), found in Homo sapiens (Human).